The sequence spans 558 residues: Factor VII-activating protease (558 aa).

A signal peptide spans 1 to 23; it reads MFARMSDLHVLLLMVLAGKTAFG. A glycan (N-linked (GlcNAc...) asparagine) is linked at Asn54. 3 EGF-like domains span residues 71-107, 109-146, and 148-186; these read EDDP…NRCQ, VQNK…SDCS, and VVPV…KLCE. 18 disulfides stabilise this stretch: Cys75–Cys86, Cys80–Cys95, Cys97–Cys106, Cys113–Cys123, Cys118–Cys134, Cys136–Cys145, Cys152–Cys163, Cys157–Cys174, Cys176–Cys185, Cys192–Cys274, Cys213–Cys255, Cys244–Cys269, Cys299–Cys433, Cys345–Cys361, Cys353–Cys422, Cys445–Cys513, Cys475–Cys491, and Cys503–Cys531. The Kringle domain maps to 191–274; sequence DCYVDDGYSY…KWEYCDVPAC (84 aa). The region spanning 312-553 is the Peptidase S1 domain; sequence IFGGFKSTAG…FLTWIKATME (242 aa). Catalysis depends on charge relay system residues His360 and Asp409. Residue Ser507 is the Charge relay system of the active site.

Belongs to the peptidase S1 family. Heterodimer; disulfide-linked. Heterodimer of a 50 kDa heavy and a 27 kDa light chain linked by a disulfide bond. Post-translationally, proteolytic cleavage at Gly-23 or Leu-27 can give rise to the 50 kDa heavy chain (HC) and cleavage at Arg-311 or Lys-317 can give rise to the 27 kDa light chain (LC). The HC can undergo further proteolytic cleavage giving rise to a 26 kDa fragment. The LC can undergo further proteolytic cleavage at Arg-311 leading to a 17-kDa fragment and at Arg-478 leading to a 8-kDa fragment.

It is found in the secreted. Its function is as follows. Cleaves the alpha-chain at multiple sites and the beta-chain between 'Lys-53' and 'Lys-54' but not the gamma-chain of fibrinogen and therefore does not initiate the formation of the fibrin clot and does not cause the fibrinolysis directly. It does not cleave (activate) prothrombin and plasminogen but converts the inactive single chain urinary plasminogen activator (pro-urokinase) to the active two chain form. Activates coagulation factor VII. May function as a tumor suppressor negatively regulating cell proliferation and cell migration. This chain is Factor VII-activating protease (HABP2), found in Bos taurus (Bovine).